Consider the following 687-residue polypeptide: Pentatricopeptide repeat-containing protein At3g09060 (687 aa).

PPR repeat units lie at residues 42–76 (SAVV…ECKC), 77–107 (DEDV…MREI), 113–147 (AIRS…GVAP), 148–182 (NLQT…GFKP), 183–217 (DVFS…GVAP), 218–253 (DVTC…SVYP), 254–288 (NVKT…EREK), 289–323 (DLYT…KASI), 324–358 (DVVT…NSVN), 359–392 (IVSY…GYAA), 393–427 (DKTT…GGHL), 428–462 (DVYA…GVEL), 463–497 (NSHV…GCRP), 498–532 (TVVS…GWKP), 533–567 (DLKT…GLET), 568–602 (DVMM…NCTA), 603–637 (NLVT…GLQP), and 638–672 (DIIS…GIFP).

The protein belongs to the PPR family. P subfamily.

This Arabidopsis thaliana (Mouse-ear cress) protein is Pentatricopeptide repeat-containing protein At3g09060.